Reading from the N-terminus, the 155-residue chain is Small ribosomal subunit protein uS7cz/uS7cy (155 aa).

It belongs to the universal ribosomal protein uS7 family. In terms of assembly, part of the 30S ribosomal subunit.

The protein resides in the plastid. Its subcellular location is the chloroplast. Functionally, one of the primary rRNA binding proteins, it binds directly to 16S rRNA where it nucleates assembly of the head domain of the 30S subunit. The chain is Small ribosomal subunit protein uS7cz/uS7cy (rps7-A) from Acorus calamus var. americanus (American sweet flag).